The chain runs to 1030 residues: Calcium-transporting ATPase 4, plasma membrane-type (1030 aa).

At 1-157 (MSNLLRDFEV…NRYTEKPARS (157 aa)) the chain is on the cytoplasmic side. An interaction with calmodulin region spans residues 19–30 (ARQRWRSSVSIV). Phosphoserine is present on Ser-28. A helical membrane pass occupies residues 158-178 (FLMFVWEALHDITLIILMVCA). The Lumenal portion of the chain corresponds to 179–196 (VVSIGVGVATEGFPRGMY). The chain crosses the membrane as a helical span at residues 197 to 217 (DGTGILLSILLVVMVTAISDY). Topologically, residues 218 to 345 (KQSLQFRDLD…EDETPLQVKL (128 aa)) are cytoplasmic. The chain crosses the membrane as a helical span at residues 346 to 365 (NGVATIIGKIGLSFAVLTFV). Residues 366–395 (VLCIRFVLDKATSGSFTNWSSEDALTLLDY) lie on the Lumenal side of the membrane. Residues 396 to 413 (FAISVTIIVVAVPEGLPL) form a helical membrane-spanning segment. The Cytoplasmic segment spans residues 414–804 (AVTLSLAFAM…RWGRAVYINI (391 aa)). The active-site 4-aspartylphosphate intermediate is Asp-451. Mg(2+) is bound by residues Asp-749 and Asp-753. Residues 805-823 (QKFVQFQLTVNVVALIINF) traverse the membrane as a helical segment. Over 824–834 (VSACITGSAPL) the chain is Lumenal. A helical transmembrane segment spans residues 835–855 (TAVQLLWVNMIMDTLGALALA). Over 856-875 (TEPPNEGLMKRAPIARTASF) the chain is Cytoplasmic. The chain crosses the membrane as a helical span at residues 876 to 898 (ITKTMWRNIAGQSVYQLIVLGIL). At 899–910 (NFAGKSLLKLDG) the chain is on the lumenal side. Residues 911 to 932 (PDSTAVLNTVIFNSFVFCQVFN) form a helical membrane-spanning segment. Over 933 to 950 (EINSREIEKINVFKGMFN) the chain is Cytoplasmic. A helical membrane pass occupies residues 951–972 (SWVFTWVMTVTVVFQVIIVEFL). At 973–982 (GAFASTVPLS) the chain is on the lumenal side. Residues 983–1004 (WQHWLLSILIGSLNMIVAVILK) traverse the membrane as a helical segment. At 1005–1030 (CVPVESRHHHDGYDLLPSGPSSSNSA) the chain is on the cytoplasmic side.

Belongs to the cation transport ATPase (P-type) (TC 3.A.3) family. Type IIB subfamily.

It localises to the vacuole membrane. The enzyme catalyses Ca(2+)(in) + ATP + H2O = Ca(2+)(out) + ADP + phosphate + H(+). Activated by calmodulin. Its function is as follows. This magnesium-dependent enzyme catalyzes the hydrolysis of ATP coupled with the translocation of calcium from the cytosol into small vacuoles. The polypeptide is Calcium-transporting ATPase 4, plasma membrane-type (ACA4) (Arabidopsis thaliana (Mouse-ear cress)).